The primary structure comprises 273 residues: WIMGHMVNAIAQIDEFVNLGANSIETDVSFDSSANPEYTYHGVPCDCGRTCTKWEHFNEFLKGLRKATTPGDSKYHEKLVLVVFDLKTGSLYDNQASDAGKKLAKSLLQNYWNNGNNGGRAYIVLSIPNLAHYKLIAGFKEALTSEGHPELMDKVGYDFSGNDDIGDVANAYKKAGVTGHVWQSDGITNCLLRGLDRVRKAVANRDSSNGYINKVYYWTVDKRQSTRDALDAGVDGIMTNYPDVVADVLNESAYKAKFRIASYDDNPWETFKN.

His-5 is a catalytic residue. Glu-25 and Asp-27 together coordinate Mg(2+). His-41 serves as the catalytic Nucleophile. Cystine bridges form between Cys-45–Cys-51 and Cys-47–Cys-190. Asp-85 is a Mg(2+) binding site. Asn-250 is a glycosylation site (N-linked (GlcNAc...) asparagine).

The protein belongs to the arthropod phospholipase D family. Class II subfamily. The cofactor is Mg(2+). In terms of tissue distribution, expressed by the venom gland.

The protein resides in the secreted. The enzyme catalyses an N-(acyl)-sphingosylphosphocholine = an N-(acyl)-sphingosyl-1,3-cyclic phosphate + choline. It carries out the reaction an N-(acyl)-sphingosylphosphoethanolamine = an N-(acyl)-sphingosyl-1,3-cyclic phosphate + ethanolamine. The catalysed reaction is a 1-acyl-sn-glycero-3-phosphocholine = a 1-acyl-sn-glycero-2,3-cyclic phosphate + choline. It catalyses the reaction a 1-acyl-sn-glycero-3-phosphoethanolamine = a 1-acyl-sn-glycero-2,3-cyclic phosphate + ethanolamine. Its function is as follows. Dermonecrotic toxins cleave the phosphodiester linkage between the phosphate and headgroup of certain phospholipids (sphingolipid and lysolipid substrates), forming an alcohol (often choline) and a cyclic phosphate. This toxin acts on sphingomyelin (SM). It may also act on ceramide phosphoethanolamine (CPE), lysophosphatidylcholine (LPC) and lysophosphatidylethanolamine (LPE), but not on lysophosphatidylserine (LPS), and lysophosphatidylglycerol (LPG). It acts by transphosphatidylation, releasing exclusively cyclic phosphate products as second products. Induces dermonecrosis, hemolysis, increased vascular permeability, edema, inflammatory response, and platelet aggregation. The protein is Dermonecrotic toxin LarSicTox-alphaIB1aii of Loxosceles arizonica (Arizona brown spider).